Consider the following 431-residue polypeptide: Zeaxanthin glucosyltransferase (431 aa).

This sequence belongs to the UDP-glycosyltransferase family.

It carries out the reaction all-trans-zeaxanthin + 2 UDP-alpha-D-glucose = zeaxanthin bis(beta-D-glucoside) + 2 UDP + 2 H(+). It participates in carotenoid biosynthesis; zeaxanthin diglucoside biosynthesis. In terms of biological role, catalyzes the glycosylation reaction which converts zeaxanthin to zeaxanthin bis(beta-D-glucoside). The reaction proceeds in two steps with the monoglucoside as an intermediate. The polypeptide is Zeaxanthin glucosyltransferase (crtX) (Pantoea ananas (Erwinia uredovora)).